Reading from the N-terminus, the 329-residue chain is Sialic acid-binding periplasmic protein SiaP (329 aa).

A signal peptide spans 1 to 23 (MMKLTKLFLATAISLGVSSAVLA). 6 residues coordinate N-acetyl-beta-neuraminate: N33, D72, E90, R150, R170, and N210.

This sequence belongs to the bacterial solute-binding protein 7 family. The complex comprises the extracytoplasmic solute receptor protein SiaP, and the fused transmembrane protein SiaT.

Its subcellular location is the periplasm. Functionally, part of the tripartite ATP-independent periplasmic (TRAP) transport system SiaPT involved in the uptake of sialic acid (N-acetyl-beta-neuraminate). This protein specifically binds sialic acid with high affinity. N-Acetylneuraminate (sialic acid) can then be incorporated into the lipooligosaccharides (LOS) as a terminal non-reducing sugar, protecting the bacterium from complement-mediated killing by normal human serum. The protein is Sialic acid-binding periplasmic protein SiaP (siaP) of Haemophilus influenzae (strain ATCC 51907 / DSM 11121 / KW20 / Rd).